Consider the following 420-residue polypeptide: MGKITIAPLTRLEGHGKVTIKLDDSGKPADVKLHITALRGFEQFVIGRPAEEVPRIVPRICGICQTAHHLASVKAVDAAWGAQIPSAAEKQRELMHLGNMIHSHALHFYYLAAPDFVLGPDADPAIRNIVGVIDAAPEVAKKAIAMRRVGQSMVEATGGKPIHPVTGIPGGLSKSMSEEKRDELLAEIDTMIQYGQDGLDLMKSLNEKYLDTINSLGVIDTWYLGLVKDGKHNFYGDTLRFVSPDGSEKMEFKPAEYLDYLGEHVVEHSYVKYPYNKKVGYPEGLYRVGPLAMINVCDSMSTPLAEEARKEFAETFGRPANQSIAYNQARLIELLSACERAKELLEDPEIVSTDVKAEVEPKAGNGVGVVYAPRGTLFHNYETDDNGIVTKANMIVATTHNVPTMEKAIQQAAEVLFKDN.

Ni(2+) contacts are provided by cysteine 61 and cysteine 64.

It belongs to the [NiFe]/[NiFeSe] hydrogenase large subunit family. The F420-non-reducing hydrogenase vhu is composed of four subunits; VhuA, VhuD, VhuG and VhuU. The cofactor is Ni(2+).

This chain is F420-non-reducing hydrogenase vhu subunit A (vhuA), found in Methanococcus voltae.